Reading from the N-terminus, the 336-residue chain is Ribose-phosphate pyrophosphokinase 1 (336 aa).

Mg(2+)-binding residues include aspartate 150, histidine 152, aspartate 161, and aspartate 165. Positions glycine 236–threonine 251 are binding of phosphoribosylpyrophosphate.

Belongs to the ribose-phosphate pyrophosphokinase family.

The catalysed reaction is D-ribose 5-phosphate + ATP = 5-phospho-alpha-D-ribose 1-diphosphate + AMP + H(+). The protein is Ribose-phosphate pyrophosphokinase 1 (PRS1) of Spinacia oleracea (Spinach).